Reading from the N-terminus, the 343-residue chain is Multidrug resistance protein MdtN (343 aa).

Topologically, residues 1–12 are cytoplasmic; it reads MESTPKKAPRSK. Residues 13-33 form a helical; Signal-anchor for type II membrane protein membrane-spanning segment; it reads FPALLVVALALVALVFVIWRV. Over 34 to 343 the chain is Periplasmic; the sequence is DSAPSTNDAY…ASAVANLEPQ (310 aa).

This sequence belongs to the membrane fusion protein (MFP) (TC 8.A.1) family. As to quaternary structure, could be part of a tripartite efflux system composed of MdtN, MdtO and MdtP.

The protein localises to the cell inner membrane. Functionally, could be involved in resistance to puromycin, acriflavine and tetraphenylarsonium chloride. The sequence is that of Multidrug resistance protein MdtN (mdtN) from Escherichia coli O157:H7.